The primary structure comprises 131 residues: Small ribosomal subunit protein uS8 (131 aa).

The protein belongs to the universal ribosomal protein uS8 family. As to quaternary structure, part of the 30S ribosomal subunit. Contacts proteins S5 and S12.

In terms of biological role, one of the primary rRNA binding proteins, it binds directly to 16S rRNA central domain where it helps coordinate assembly of the platform of the 30S subunit. The protein is Small ribosomal subunit protein uS8 of Sorangium cellulosum (strain So ce56) (Polyangium cellulosum (strain So ce56)).